We begin with the raw amino-acid sequence, 73 residues long: Kazal peptide Pr13a (73 aa).

Residues 1–20 form the signal peptide; that stretch reads MKYIILFLVLIGLQANLALG. Residues 21–73 form the Kazal-like domain; sequence SKCKCDCTKYPYSPVCAKELKTGDTETFNNVCQLQCYNCTHMKNYVVIYSGSC. Disulfide bonds link cysteine 23–cysteine 59, cysteine 27–cysteine 52, and cysteine 36–cysteine 73.

In terms of tissue distribution, expressed by the venom gland (anterior main gland) (at protein level).

Its subcellular location is the secreted. In terms of biological role, may act as a serine protease inhibitor, since it possess the kazal serine protease inhibitor signature. This chain is Kazal peptide Pr13a, found in Platymeris rhadamanthus (Red spot assassin bug).